Reading from the N-terminus, the 236-residue chain is uncharacterized protein (236 aa).

Residues Asp-22, Asn-49, and Lys-82 each coordinate NADP(+). Catalysis depends on proton donor residues Ser-100 and Tyr-114. Tyr-114 and Lys-118 together coordinate NADP(+). The active-site Lowers pKa of active site Tyr is Lys-118.

It belongs to the short-chain dehydrogenases/reductases (SDR) family.

Its subcellular location is the cytoplasm. It is found in the nucleus. This is an uncharacterized protein from Schizosaccharomyces pombe (strain 972 / ATCC 24843) (Fission yeast).